A 126-amino-acid chain; its full sequence is Large ribosomal subunit protein bL12 (126 aa).

Belongs to the bacterial ribosomal protein bL12 family. Homodimer. Part of the ribosomal stalk of the 50S ribosomal subunit. Forms a multimeric L10(L12)X complex, where L10 forms an elongated spine to which 2 to 4 L12 dimers bind in a sequential fashion. Binds GTP-bound translation factors.

Forms part of the ribosomal stalk which helps the ribosome interact with GTP-bound translation factors. Is thus essential for accurate translation. The protein is Large ribosomal subunit protein bL12 of Acidobacterium capsulatum (strain ATCC 51196 / DSM 11244 / BCRC 80197 / JCM 7670 / NBRC 15755 / NCIMB 13165 / 161).